The primary structure comprises 231 residues: Ribonuclease 3 (231 aa).

The RNase III domain occupies 5–134; sequence QKGIKEDFGI…FIGALYKDQG (130 aa). A Mg(2+)-binding site is contributed by Glu-47. Asp-51 is a catalytic residue. Mg(2+) contacts are provided by Asp-120 and Glu-123. The active site involves Glu-123. In terms of domain architecture, DRBM spans 160 to 230; it reads DYKSKLQELL…AKKAYQDVTP (71 aa).

This sequence belongs to the ribonuclease III family. In terms of assembly, homodimer. The cofactor is Mg(2+).

Its subcellular location is the cytoplasm. The catalysed reaction is Endonucleolytic cleavage to 5'-phosphomonoester.. Digests double-stranded RNA. Involved in the processing of primary rRNA transcript to yield the immediate precursors to the large and small rRNAs (23S and 16S). Processes some mRNAs, and tRNAs when they are encoded in the rRNA operon. Processes pre-crRNA and tracrRNA of type II CRISPR loci if present in the organism. The chain is Ribonuclease 3 from Oenococcus oeni (strain ATCC BAA-331 / PSU-1).